The primary structure comprises 509 residues: Methionine--tRNA ligase (509 aa).

The short motif at Tyr-12–His-22 is the 'HIGH' region element. Residues Lys-302–Ser-306 carry the 'KMSKS' region motif. Lys-305 provides a ligand contact to ATP.

This sequence belongs to the class-I aminoacyl-tRNA synthetase family. MetG type 2B subfamily. As to quaternary structure, monomer.

Its subcellular location is the cytoplasm. It catalyses the reaction tRNA(Met) + L-methionine + ATP = L-methionyl-tRNA(Met) + AMP + diphosphate. In terms of biological role, is required not only for elongation of protein synthesis but also for the initiation of all mRNA translation through initiator tRNA(fMet) aminoacylation. This Mycoplasmopsis pulmonis (strain UAB CTIP) (Mycoplasma pulmonis) protein is Methionine--tRNA ligase (metG).